A 507-amino-acid chain; its full sequence is 3-[(3aS,4S,7aS)-7a-methyl-1,5-dioxo-octahydro-1H-inden-4-yl]propanoyl:CoA ligase (507 aa).

Residues 177–185 (TSGTTGRSK), Asp391, Arg406, and Lys497 each bind ATP.

Belongs to the ATP-dependent AMP-binding enzyme family.

The catalysed reaction is 3-[(3aS,4S,7aS)-7a-methyl-1,5-dioxo-octahydro-1H-inden-4-yl]propanoate + ATP + CoA = 3-[(3aS,4S,7aS)-7a-methyl-1,5-dioxo-octahydro-1H-inden-4-yl]propanoyl-CoA + AMP + diphosphate. The enzyme catalyses 5-hydroxy-3-[(3aS,4S,5R,7aS)-7a-methyl-1,5-dioxo-octahydro-1H-inden-4-yl]propanoate + ATP + CoA = 3-[(3aS,4S,5R,7aS)-5-hydroxy-7a-methyl-1-oxo-octahydro-1H-inden-4-yl]propanoyl-CoA + AMP + diphosphate. Its function is as follows. Involved in the catabolism of the rings C and D of cholesterol. Catalyzes the ATP-dependent CoA thioesterification of 3aalpha-H-4alpha(3'-propanoate)-7abeta-methylhexahydro-1,5-indanedione (HIP) to yield HIP-CoA. It can also use the hydroxylated analogs of HIP, 5alpha-OH HIP and 1beta-OH HIP. It requires that the side chain at C17 is completely removed. The chain is 3-[(3aS,4S,7aS)-7a-methyl-1,5-dioxo-octahydro-1H-inden-4-yl]propanoyl:CoA ligase from Mycobacterium tuberculosis (strain ATCC 25618 / H37Rv).